The following is a 969-amino-acid chain: Exoribonuclease II, mitochondrial (969 aa).

The N-terminal 41 residues, 1 to 41 (MVVRRKVHVLLIARSFHSYTPCFRVTTRGKRQRSKSKQQAK), are a transit peptide targeting the mitochondrion. Residues 28-38 (RGKRQRSKSKQ) are compositionally biased toward basic residues. The disordered stretch occupies residues 28-54 (RGKRQRSKSKQQAKVELDHTRELDNDQ). A compositionally biased stretch (basic and acidic residues) spans 40–51 (AKVELDHTRELD). The 332-residue stretch at 522 to 853 (RYDFGDLRVF…NHLQIHRHLQ (332 aa)) folds into the RNB domain.

It belongs to the RNR ribonuclease family. MSU1 and SUV3 are the two components of the mitochondrial degradosome (mtEXO).

It localises to the mitochondrion matrix. The catalysed reaction is Exonucleolytic cleavage in the 3'- to 5'-direction to yield nucleoside 5'-phosphates.. Functionally, essential for mitochondrial biogenesis. In terms of biological role, required for intron-independent turnover and processing of mitochondrial RNA. Participates in 3' mtRNA processing where it hydrolyzes single-stranded RNA or partially double-stranded RNA with 3' single-stranded tails. The polypeptide is Exoribonuclease II, mitochondrial (DSS1) (Saccharomyces cerevisiae (strain ATCC 204508 / S288c) (Baker's yeast)).